A 114-amino-acid chain; its full sequence is Ig heavy chain V region GOM (114 aa).

Positions 1–112 constitute an Ig-like domain; it reads EVQLVESGGD…YWGQGTLVTV (112 aa).

The polypeptide is Ig heavy chain V region GOM (Canis lupus familiaris (Dog)).